The sequence spans 629 residues: LEAF RUST 10 DISEASE-RESISTANCE LOCUS RECEPTOR-LIKE PROTEIN KINASE-like 1.1 (629 aa).

A signal peptide spans 1–19 (METVSVLLFFFLFLLAAEA). Residues 20 to 225 (RSTKRTGCKD…PNNYHAEMRL (206 aa)) are Extracellular-facing. Residues N56, N92, N123, N124, N172, and N177 are each glycosylated (N-linked (GlcNAc...) asparagine). A helical membrane pass occupies residues 226–246 (GLGIGGSVILIIILVALFAVI). The Cytoplasmic portion of the chain corresponds to 247-629 (HRNYRRKDGS…TTPNTSAYEF (383 aa)). Residues 291–565 (FSKDRLLGDG…TMEQVVHELK (275 aa)) enclose the Protein kinase domain. ATP is bound by residues 297-305 (LGDGGFGTV) and K319. Y365 is modified (phosphotyrosine). D416 functions as the Proton acceptor in the catalytic mechanism. S449 is subject to Phosphoserine. T450 and T455 each carry phosphothreonine. Y463 carries the phosphotyrosine modification. The interval 609–629 (VSVTDQWTSKSTTPNTSAYEF) is disordered.

It belongs to the protein kinase superfamily. Ser/Thr protein kinase family.

The protein localises to the cell membrane. It catalyses the reaction L-seryl-[protein] + ATP = O-phospho-L-seryl-[protein] + ADP + H(+). The enzyme catalyses L-threonyl-[protein] + ATP = O-phospho-L-threonyl-[protein] + ADP + H(+). The polypeptide is LEAF RUST 10 DISEASE-RESISTANCE LOCUS RECEPTOR-LIKE PROTEIN KINASE-like 1.1 (Arabidopsis thaliana (Mouse-ear cress)).